The primary structure comprises 652 residues: Probable potassium transport system protein Kup (652 aa).

The segment covering 1-20 (MSNDTSPGTSSVDSKSSDPS) has biased composition (low complexity). The segment at 1-26 (MSNDTSPGTSSVDSKSSDPSYGVPGH) is disordered. Helical transmembrane passes span 36–56 (LSLG…LYAL), 76–96 (LVSL…VMFI), 125–145 (WLIV…MITP), 161–181 (PSFD…LFCI), 193–213 (FGPI…FNII), 228–248 (AIHF…SVVL), 270–290 (LGWY…QCAL), 314–334 (LIIL…TGAF), 362–382 (IYIP…IAMF), 391–411 (AYGI…GVLV), 419–439 (AWQS…FFLS), and 444–464 (IPEG…MLMT).

It belongs to the HAK/KUP transporter (TC 2.A.72) family.

It is found in the cell inner membrane. It carries out the reaction K(+)(in) + H(+)(in) = K(+)(out) + H(+)(out). Its function is as follows. Transport of potassium into the cell. Likely operates as a K(+):H(+) symporter. This is Probable potassium transport system protein Kup from Zymomonas mobilis subsp. mobilis (strain ATCC 31821 / ZM4 / CP4).